The chain runs to 234 residues: Zinc finger FYVE domain-containing protein 21 (234 aa).

An FYVE-type zinc finger spans residues 44 to 104 (DKECRRCMQC…QCAECALVSL (61 aa)). Zn(2+) contacts are provided by C50, C53, C66, C69, C74, C77, C96, and C99. The segment at 107–234 (AEFYDKQLKV…AKLLYESRDQ (128 aa)) is PH-like.

As to quaternary structure, interacts with PTK2/FAK1.

Its subcellular location is the cell junction. The protein resides in the focal adhesion. It is found in the cytoplasmic vesicle. The protein localises to the endosome. In terms of biological role, plays a role in cell adhesion, and thereby in cell motility which requires repeated formation and disassembly of focal adhesions. Regulates microtubule-induced PTK2/FAK1 dephosphorylation, an event important for focal adhesion disassembly, as well as integrin beta-1/ITGB1 cell surface expression. The sequence is that of Zinc finger FYVE domain-containing protein 21 (ZFYVE21) from Homo sapiens (Human).